Reading from the N-terminus, the 203-residue chain is GTP-binding protein ypt1 (203 aa).

Residues 15–23 (GDSGVGKSC), 33–40 (YTESYIST), 63–67 (DTAGQ), 121–124 (NKSD), and 151–153 (SAK) each bind GTP. The Effector region motif lies at 37-45 (YISTIGVDF). Thr164 bears the Phosphothreonine mark. 2 S-geranylgeranyl cysteine lipidation sites follow: Cys202 and Cys203.

The protein belongs to the small GTPase superfamily. Rab family.

It localises to the endoplasmic reticulum membrane. The protein resides in the golgi apparatus membrane. It is found in the cytoplasm. The protein localises to the preautophagosomal structure membrane. With respect to regulation, rab activation is generally mediated by a guanine exchange factor (GEF), while inactivation through hydrolysis of bound GTP is catalyzed by a GTPase activating protein (GAP). Functionally, the small GTPases Rab are key regulators of intracellular membrane trafficking, from the formation of transport vesicles to their fusion with membranes. Rabs cycle between an inactive GDP-bound form and an active GTP-bound form that is able to recruit to membranes different set of downstream effectors directly responsible for vesicle formation, movement, tethering and fusion. Ypt1 regulates the trafficking of secretory vesicles from the endoplasmic reticulum (ER) to the Golgi. Plays a role in the initial events of the autophagic vacuole development which take place at specialized regions of the endoplasmic reticulum. Also involved in the recycling of membrane proteins. The polypeptide is GTP-binding protein ypt1 (ypt1) (Schizosaccharomyces pombe (strain 972 / ATCC 24843) (Fission yeast)).